The chain runs to 368 residues: Mitogen-activated protein kinase KSS1 (368 aa).

A Protein kinase domain is found at 13–313 (YKLVDLIGEG…AAEALRHPYL (301 aa)). Residues 19–27 (IGEGAYGTV) and Lys-42 contribute to the ATP site. Catalysis depends on Asp-143, which acts as the Proton acceptor. Residue Thr-183 is modified to Phosphothreonine. Residues 183–185 (TEY) carry the TXY motif. Tyr-185 bears the Phosphotyrosine mark.

This sequence belongs to the protein kinase superfamily. Ser/Thr protein kinase family. MAP kinase subfamily. HOG1 sub-subfamily. In the nucleus, KSS1 forms a complex with DIG1, DIG2 and STE12; in contrast to FUS3 the interaction of KSS1 with STE12 does not depend on DIG1 and DIG2. Phosphorylated KSS1 shows reduced interaction with STE12. During pheromone activation and phosphorylation, KSS1 forms a membrane-associated complex with the scaffold protein STE5, the MAPKK STE7, the MAPKKK STE11, and the G-protein beta subunit GBB/STE4; interacting directly with POF1, STE7 and STE5 proteins. Mg(2+) is required as a cofactor. In terms of processing, dually phosphorylated on Thr-183 and Tyr-185 by STE7 in response to pheromone or carbon/nitrogen limitation, which activates the enzyme. Activated FUS3 down-regulates KSS1 phosphorylation.

Its subcellular location is the nucleus. The protein resides in the cytoplasm. The protein localises to the periplasm. It catalyses the reaction L-seryl-[protein] + ATP = O-phospho-L-seryl-[protein] + ADP + H(+). The catalysed reaction is L-threonyl-[protein] + ATP = O-phospho-L-threonyl-[protein] + ADP + H(+). Activated by tyrosine and threonine phosphorylation after pheromone treatment or carbon/nitrogen limitation. Its function is as follows. Together with closely related FUS3, KSS1 is the final kinase in the signal transduction cascade regulating activation/repression of the mating and filamentation pathways, induced by pheromone and nitrogen/carbon limitation, respectively. Phosphorylated KSS1 activates both pathways, whereas activated FUS3 activates the mating but suppresses the filamentation pathway. KSS1 activity is down-regulated by FUS3 during pheromone induction to prevent inappropriate activation of the filamentation pathway. During induction of filamentation, KSS1 activates the transcription factor STE12 resulting in its binding to and activation of filamentation specific genes. Non-activated KSS1 has a kinase-independent repressive effect on STE12 transcriptional activity, that is mediated by direct binding to STE12 and depends on the presence of DIG1 and DIG2, and that is required for the suppression of filamentation under normal growth conditions. SSN3/SRB10 contributes further to the suppression of filamentation under these conditions by reducing STE12 stability independent of KSS1. FUS3 can partially compensate for the lack of KSS1 but filamentation becomes constitutively induced at a low level in the absence of any signal. KSS1 phosphorylates STE7, STE5, FAR1, DIG1, DIG2, STE12, and SST2. In Saccharomyces cerevisiae (strain ATCC 204508 / S288c) (Baker's yeast), this protein is Mitogen-activated protein kinase KSS1 (KSS1).